Here is a 358-residue protein sequence, read N- to C-terminus: tRNA(Ile)-lysidine synthase (358 aa).

35-40 (SGGPDS) contributes to the ATP binding site.

Belongs to the tRNA(Ile)-lysidine synthase family.

Its subcellular location is the cytoplasm. It catalyses the reaction cytidine(34) in tRNA(Ile2) + L-lysine + ATP = lysidine(34) in tRNA(Ile2) + AMP + diphosphate + H(+). Functionally, ligates lysine onto the cytidine present at position 34 of the AUA codon-specific tRNA(Ile) that contains the anticodon CAU, in an ATP-dependent manner. Cytidine is converted to lysidine, thus changing the amino acid specificity of the tRNA from methionine to isoleucine. The protein is tRNA(Ile)-lysidine synthase of Bradyrhizobium sp. (strain BTAi1 / ATCC BAA-1182).